Reading from the N-terminus, the 420-residue chain is MRCMEEYLFDRSKLAARPLGKVLAEDYCFDLEREEASGFRVSKGFLWCGECRAMEVDEKTVYLHGSKLFMVSDSLKVYELPSALPSSGLVVRGDDCVYIEKNGRRWTFPDMPEDEVLDGTFLGDRVWIWHAVNTEGRRHLSRSTYLLETEKAVRCEGKMYARDGETILQVQDILVRKDAEICNPTRVWSRGAGDGMVVITTTPDTVWMEYGGYVSSKPCCKEIYGMDGCRLLGLSSCVDVSDLYLTLRLFTDIPVEVEAVEKIEEYLFKLFVFTDRGGRLVEWLVESGMDRQKEMILCRLYRKVDDKGKRVLERWMQGIQSLDALKLIIIYFPEKLERYIKMCIEEKREFEIEEVVEHYQGSDKIEEICLVLLKNSCLHLFSLCMPEYKGRFGDVALVERYNMESQRNMWKTQRIHGDLI.

This is an uncharacterized protein from Encephalitozoon cuniculi (strain GB-M1) (Microsporidian parasite).